The chain runs to 187 residues: Small ribosomal subunit protein uS5 (187 aa).

One can recognise an S5 DRBM domain in the interval 21–84 (MVDKLVHINR…ESAKRDMIFV (64 aa)).

This sequence belongs to the universal ribosomal protein uS5 family. In terms of assembly, part of the 30S ribosomal subunit. Contacts proteins S4 and S8.

In terms of biological role, with S4 and S12 plays an important role in translational accuracy. Functionally, located at the back of the 30S subunit body where it stabilizes the conformation of the head with respect to the body. This Mesorhizobium japonicum (strain LMG 29417 / CECT 9101 / MAFF 303099) (Mesorhizobium loti (strain MAFF 303099)) protein is Small ribosomal subunit protein uS5.